Reading from the N-terminus, the 323-residue chain is D-alanine--D-alanine ligase (323 aa).

In terms of domain architecture, ATP-grasp spans 105–305 (KQQLVPRGIP…YEDLVEAIVE (201 aa)). 131-188 (PLARPYVLKPVNEGSSVGVAIVTDESNYGNPIRRDAPGPWQEFRELLAEPFIRGRELT) contributes to the ATP binding site. Mg(2+)-binding residues include aspartate 256, glutamate 272, and asparagine 274.

It belongs to the D-alanine--D-alanine ligase family. Mg(2+) is required as a cofactor. Requires Mn(2+) as cofactor.

Its subcellular location is the cytoplasm. It carries out the reaction 2 D-alanine + ATP = D-alanyl-D-alanine + ADP + phosphate + H(+). It functions in the pathway cell wall biogenesis; peptidoglycan biosynthesis. Its function is as follows. Cell wall formation. The sequence is that of D-alanine--D-alanine ligase from Erythrobacter litoralis (strain HTCC2594).